Consider the following 119-residue polypeptide: Basic phospholipase A2 notechis II-5 (119 aa).

7 cysteine pairs are disulfide-bonded: Cys-11-Cys-71, Cys-27-Cys-118, Cys-29-Cys-45, Cys-44-Cys-99, Cys-51-Cys-92, Cys-60-Cys-85, and Cys-78-Cys-90. Ca(2+) contacts are provided by Tyr-28, Gly-30, and Gly-32. Residue His-48 is part of the active site. Asp-49 is a Ca(2+) binding site. Asp-93 is an active-site residue.

Belongs to the phospholipase A2 family. Group I subfamily. D49 sub-subfamily. Ca(2+) is required as a cofactor. As to expression, expressed by the venom gland.

The protein resides in the secreted. It carries out the reaction a 1,2-diacyl-sn-glycero-3-phosphocholine + H2O = a 1-acyl-sn-glycero-3-phosphocholine + a fatty acid + H(+). Snake venom phospholipase A2 (PLA2) that inhibits neuromuscular transmission by blocking acetylcholine release from the nerve termini. Notechis II-5 is less toxic than notexin but has a higher specific phospholipase activity. PLA2 catalyzes the calcium-dependent hydrolysis of the 2-acyl groups in 3-sn-phosphoglycerides. In Notechis scutatus scutatus (Mainland tiger snake), this protein is Basic phospholipase A2 notechis II-5.